The sequence spans 162 residues: Anthrone oxygenase nsrD (162 aa).

3 helical membrane passes run 17–37 (FLSGSMMSLSALVIPLFLDTI), 54–74 (GSIYMPALCVATCGIYGYVAL), and 86–106 (PYVLAAVSTLAMVPFTWWVMV). N-linked (GlcNAc...) asparagine glycosylation is present at asparagine 109. A helical transmembrane segment spans residues 130 to 150 (LVVKWAWLHVVRSLYPLFGAF).

The protein belongs to the anthrone oxygenase family.

Its subcellular location is the membrane. The catalysed reaction is emodin anthrone + O2 = emodin + H2O + H(+). Its pathway is secondary metabolite biosynthesis. Anthrone oxygenase; part of the gene cluster that mediates the biosynthesis of the tetrahydroxanthone dimer neosartorin, which exhibits antibacterial activity. The two different monomeric units appear to be synthesized by the same set of enzymes, among which the Baeyer-Villiger monooxygenase nsrF is the key enzyme for the divergence of the biosynthetic routes. The pathway begins with the synthesis of atrochrysone thioester by the polyketide synthase nsrB. The atrochrysone carboxyl ACP thioesterase nsrC then breaks the thioester bond and releases the atrochrysone carboxylic acid from AacuL. Atrochrysone carboxylic acid is decarboxylated by the decarboxylase nsrE, and oxidized by the anthrone oxygenase nsrD to yield emodin. Emodin is then reduced to emodin hydroquinone by the oxidoreductase nsrR. A-ring reduction by the short chain dehydrogenase nsrJ, dehydration by the scytalone dehydratase-like protein nsrI and probable spontaneous re-oxidation, results in overall deoxygenation to chrysophanol. The Baeyer-Villiger monooxygenase nsrF accepts chrysophanol as a substrate to insert one oxygen atom at two different positions to yield the precursors of both monomric units. NsrF is promiscuous/flexible in interacting with the 2 (non methylated and methylated) aromatic rings of chrysophanol, thus diverging the biosynthetic pathway at this point. After the hydrolysis of the lactones, methylesterification by the methyltransferase nsrG yields respectively moniliphenone and 2,2',6'-trihydroxy-4-methyl-6-methoxya-cyldiphenylmethanone. The next steps are the hydroxylation by the FAD-dependent monooxygenase nsrK, followed by isomerization by the monooxygenase nsrQ. The short chain dehydrogenase/reductase nsrO then catalyzes the C-5 ketoreduction to give the xanthone skeleton of blennolide C and 5-acetylblennolide A. The acetyltransferase nsrL has a strict substrate specificity and uses only blennolide A but not blennolide C to yield 5-acetylblennolide A as the single-acetylated product. In the final step of the biosynthesis, the heterodimerization of the 2 xanthones, blennolide C and 5-acetylblennolide A, is catalyzed by the cytochrome P450 monooxygenase nsrP. NsrP can utilize at least three different xanthones as its substrates to perform the dimerization reaction. This is Anthrone oxygenase nsrD from Aspergillus novofumigatus (strain IBT 16806).